We begin with the raw amino-acid sequence, 624 residues long: Elongation factor 4 (624 aa).

The tr-type G domain maps to 17–203 (ALIRNFCIIA…RVVRDVPAPV (187 aa)). Residues 29-34 (DHGKST) and 150-153 (NKID) each bind GTP.

Belongs to the TRAFAC class translation factor GTPase superfamily. Classic translation factor GTPase family. LepA subfamily.

The protein localises to the cell membrane. It catalyses the reaction GTP + H2O = GDP + phosphate + H(+). Its function is as follows. Required for accurate and efficient protein synthesis under certain stress conditions. May act as a fidelity factor of the translation reaction, by catalyzing a one-codon backward translocation of tRNAs on improperly translocated ribosomes. Back-translocation proceeds from a post-translocation (POST) complex to a pre-translocation (PRE) complex, thus giving elongation factor G a second chance to translocate the tRNAs correctly. Binds to ribosomes in a GTP-dependent manner. This is Elongation factor 4 from Streptomyces griseus subsp. griseus (strain JCM 4626 / CBS 651.72 / NBRC 13350 / KCC S-0626 / ISP 5235).